The sequence spans 742 residues: Dynein axonemal intermediate chain 4 (742 aa).

WD repeat units lie at residues 462–502 (HCEC…DFPV), 511–559 (KHTS…DCND), 631–671 (GHKG…PILT), and 674–713 (NTTN…IDPV).

In terms of assembly, part of the multisubunit axonemal dynein complex formed at least of two heavy chains and a number of intermediate and light chains. Associated with axonemal dynein subunits such as, DNAH2, DNAI3, and DYNLT1.

The protein resides in the cytoplasm. The protein localises to the cytoskeleton. It is found in the flagellum axoneme. It localises to the cilium axoneme. Its subcellular location is the dynein axonemal particle. Plays a critical role in the assembly of axonemal dynein complex, thereby playing a role in ciliary motility. The polypeptide is Dynein axonemal intermediate chain 4 (Xenopus laevis (African clawed frog)).